The following is a 422-amino-acid chain: Histidine--tRNA ligase (422 aa).

It belongs to the class-II aminoacyl-tRNA synthetase family. In terms of assembly, homodimer.

It is found in the cytoplasm. It catalyses the reaction tRNA(His) + L-histidine + ATP = L-histidyl-tRNA(His) + AMP + diphosphate + H(+). The chain is Histidine--tRNA ligase from Vibrio campbellii (strain ATCC BAA-1116).